Consider the following 144-residue polypeptide: Large ribosomal subunit protein uL15 (144 aa).

The tract at residues 1–58 (MKLNNLSPAPGSKHAEKRVGRGIGSGLGKTGGRGHKGQKSRSGGSVKPGFEGGQMPLQ) is disordered. Positions 21–31 (RGIGSGLGKTG) are enriched in gly residues.

Belongs to the universal ribosomal protein uL15 family. Part of the 50S ribosomal subunit.

Binds to the 23S rRNA. The chain is Large ribosomal subunit protein uL15 from Chromohalobacter salexigens (strain ATCC BAA-138 / DSM 3043 / CIP 106854 / NCIMB 13768 / 1H11).